The following is a 1080-amino-acid chain: Phycobiliprotein ApcE (1080 aa).

The segment at 18 to 76 (QTLAVATITQAEQQDRFLGTGELNELATYFASGAKRLEIAQTLTENSEIIVSRAANRIF) is phycobilin-like 1. The segment at 77 to 144 (VGGSPMSFLE…GPTPPGFRPI (68 aa)) is phycobilin-like loop. The tract at residues 145–237 (NVARYGPSNM…YMDVLLTEFK (93 aa)) is phycobilin-like 2. Cys-195 lines the (2R,3E)-phycocyanobilin pocket. PBS-linker domains are found at residues 252-432 (DQQG…FRKV), 514-693 (LGPK…QKQE), 710-888 (PDIQ…KQND), and 922-1080 (STSA…SLGN). Positions 906–930 (GTSSSGRNGFTDLGRSSTSAQGQLG) are disordered.

It belongs to the phycobilisome linker protein family. As to quaternary structure, phycobilisomes of this organism are composed of a two cylinder core, from which six rods radiate. The core is mainly composed of allophycocyanin alpha and beta chains, and of three minor components: the allophycocyanin alpha-B chain, a 18.3 kDa polypeptide, and the anchor polypeptide L-CM. In terms of processing, contains one covalently linked bilin chromophore. This protein autochromophorylates.

Its subcellular location is the cellular thylakoid membrane. In terms of biological role, this protein is postulated to act both as terminal energy acceptor (by its phycobilin-like domains) and as a linker polypeptide (by its repeats and arms) that stabilizes the phycobilisome core architecture. Has intrinsic bilin lyase activity. The polypeptide is Phycobiliprotein ApcE (apcE) (Microchaete diplosiphon (Fremyella diplosiphon)).